The sequence spans 376 residues: UDP-N-acetylglucosamine--N-acetylmuramyl-(pentapeptide) pyrophosphoryl-undecaprenol N-acetylglucosamine transferase (376 aa).

Residues 14–16 (TGG), Asn-128, Arg-169, Ser-201, Ile-256, and Gln-301 each bind UDP-N-acetyl-alpha-D-glucosamine.

The protein belongs to the glycosyltransferase 28 family. MurG subfamily.

Its subcellular location is the cell inner membrane. The catalysed reaction is di-trans,octa-cis-undecaprenyl diphospho-N-acetyl-alpha-D-muramoyl-L-alanyl-D-glutamyl-meso-2,6-diaminopimeloyl-D-alanyl-D-alanine + UDP-N-acetyl-alpha-D-glucosamine = di-trans,octa-cis-undecaprenyl diphospho-[N-acetyl-alpha-D-glucosaminyl-(1-&gt;4)]-N-acetyl-alpha-D-muramoyl-L-alanyl-D-glutamyl-meso-2,6-diaminopimeloyl-D-alanyl-D-alanine + UDP + H(+). It functions in the pathway cell wall biogenesis; peptidoglycan biosynthesis. Functionally, cell wall formation. Catalyzes the transfer of a GlcNAc subunit on undecaprenyl-pyrophosphoryl-MurNAc-pentapeptide (lipid intermediate I) to form undecaprenyl-pyrophosphoryl-MurNAc-(pentapeptide)GlcNAc (lipid intermediate II). This is UDP-N-acetylglucosamine--N-acetylmuramyl-(pentapeptide) pyrophosphoryl-undecaprenol N-acetylglucosamine transferase from Phocaeicola vulgatus (strain ATCC 8482 / DSM 1447 / JCM 5826 / CCUG 4940 / NBRC 14291 / NCTC 11154) (Bacteroides vulgatus).